We begin with the raw amino-acid sequence, 53 residues long: Ferredoxin B (53 aa).

The tract at residues 1–35 is N-terminal extension; sequence GIDPNYRSLPVVKEEQGVKIYGTYEPPTKLGIWGT. Residue lysine 29 is modified to N6-methyllysine. A 4Fe-4S ferredoxin-type 1 domain is found at 34–53; it reads GTIVGVDFDLCIADGSCINA. Cysteine 44 and cysteine 50 together coordinate [3Fe-4S] cluster.

Requires [3Fe-4S] cluster as cofactor. The cofactor is [4Fe-4S] cluster.

Its function is as follows. Ferredoxins are iron-sulfur proteins that transfer electrons in a wide variety of metabolic reactions. The polypeptide is Ferredoxin B (Sulfuracidifex metallicus (Sulfolobus metallicus)).